The primary structure comprises 489 residues: Rhamnulokinase (489 aa).

Position 13-17 (13-17) interacts with ATP; it reads ASSGR. C68 and C222 are oxidised to a cystine. Residues G83 and 236 to 238 each bind substrate; that span reads HDT. Residue D237 is the Proton acceptor of the active site. T259 provides a ligand contact to ATP. N296 is a substrate binding site. Q304 lines the ATP pocket. An intrachain disulfide couples C353 to C370. G402 is an ATP binding site. An intrachain disulfide couples C413 to C417.

Belongs to the rhamnulokinase family. Mg(2+) serves as cofactor.

It catalyses the reaction L-rhamnulose + ATP = L-rhamnulose 1-phosphate + ADP + H(+). Its pathway is carbohydrate degradation; L-rhamnose degradation; glycerone phosphate from L-rhamnose: step 2/3. Its function is as follows. Involved in the catabolism of L-rhamnose (6-deoxy-L-mannose). Catalyzes the transfer of the gamma-phosphate group from ATP to the 1-hydroxyl group of L-rhamnulose to yield L-rhamnulose 1-phosphate. The sequence is that of Rhamnulokinase from Salmonella agona (strain SL483).